A 466-amino-acid polypeptide reads, in one-letter code: Gamma-aminobutyric acid permease (466 aa).

Topologically, residues 2–20 (GQSSQPHELGGGLKSRHVT) are cytoplasmic. 2 helical membrane passes run 21-41 (MLSIAGVIGASLFVGSSVAIA) and 42-62 (EAGPAVLLAYLFAGLLVVMIM). The Cytoplasmic portion of the chain corresponds to 63-96 (RMLAEMAVATPDTGSFSTYADKAIGRWAGYTIGW). The helical transmembrane segment at 97 to 117 (LYWWFWVLVIPLEANIAAMIL) threads the bilayer. A topological domain (periplasmic) is located at residue H118. Residues 119-139 (SWVPGIPIWLFSLVITLALTG) form a helical membrane-spanning segment. The Cytoplasmic segment spans residues 140 to 153 (SNLLSVKNYGEFEF). A helical membrane pass occupies residues 154-174 (WLALCKVIAILAFIFLGAVAI). Residues 175-199 (SGFYPYAEVSGISRLWDSGGFMPNG) lie on the Periplasmic side of the membrane. A helical membrane pass occupies residues 200–220 (FGAVLSAMLITMFSFMGAEIV). Residues 221 to 246 (TIAAAESDTPEKHIVRATNSVIWRIS) lie on the Cytoplasmic side of the membrane. The chain crosses the membrane as a helical span at residues 247 to 267 (IFYLCSIFVVVALIPWNMPGL). Residues 268–286 (KAVGSYRSVLELLNIPHAK) lie on the Periplasmic side of the membrane. Residues 287 to 307 (LIMDCVILLSVTSCLNSALYT) traverse the membrane as a helical segment. Residues 308–334 (ASRMLYSLSRRGDAPAVMGKINRSKTP) are Cytoplasmic-facing. The helical transmembrane segment at 335-355 (YVAVLLSTGAAFLTVVVNYYA) threads the bilayer. At 356 to 358 (PAK) the chain is on the periplasmic side. The helical transmembrane segment at 359–379 (VFKFLIDSSGAIALLVYLVIA) threads the bilayer. The Cytoplasmic segment spans residues 380–402 (VSQLRMRKILRAEGSEIRLRMWL). A helical transmembrane segment spans residues 403–423 (YPWLTWLVIGFITFVLVVMLF). The Periplasmic portion of the chain corresponds to 424 to 428 (RPAQQ). A helical membrane pass occupies residues 429 to 449 (LEVISTGLLAIGIICTVPIMA). Over 450–466 (RWKKLVLWQKTPVHNTR) the chain is Cytoplasmic.

Belongs to the amino acid-polyamine-organocation (APC) superfamily. Amino acid transporter (AAT) (TC 2.A.3.1) family. In terms of assembly, monomer.

It is found in the cell inner membrane. It catalyses the reaction 4-aminobutanoate(in) + H(+)(in) = 4-aminobutanoate(out) + H(+)(out). Its pathway is amino-acid degradation; 4-aminobutanoate degradation. Its activity is regulated as follows. Uptake is stimulated by ammonium sulfate and abolished by 2,4-dinitrophenol. Is affected both topologically and kinetically by phospholipid composition of the membrane. In cells lacking phosphatidylethanolamine (PE), the N-terminal hairpin is inverted relative to the membrane and the rate of GABA transport is reduced by more than 99%. Its function is as follows. Transporter for gamma-aminobutyrate (GABA). Transport is driven by the membrane potential. Can also transport a number of GABA analogs such as nipecotic acid or muscimol. This is Gamma-aminobutyric acid permease from Escherichia coli (strain K12).